The primary structure comprises 283 residues: Pantothenate synthetase (283 aa).

30 to 37 (MGYYHSGH) serves as a coordination point for ATP. Catalysis depends on H37, which acts as the Proton donor. Q61 serves as a coordination point for (R)-pantoate. Q61 provides a ligand contact to beta-alanine. 147 to 150 (GQKD) contributes to the ATP binding site. Residue Q153 coordinates (R)-pantoate. Residues V176 and 184 to 187 (MSSR) each bind ATP.

The protein belongs to the pantothenate synthetase family. In terms of assembly, homodimer.

It is found in the cytoplasm. The enzyme catalyses (R)-pantoate + beta-alanine + ATP = (R)-pantothenate + AMP + diphosphate + H(+). It participates in cofactor biosynthesis; (R)-pantothenate biosynthesis; (R)-pantothenate from (R)-pantoate and beta-alanine: step 1/1. Catalyzes the condensation of pantoate with beta-alanine in an ATP-dependent reaction via a pantoyl-adenylate intermediate. The sequence is that of Pantothenate synthetase from Nitratidesulfovibrio vulgaris (strain DSM 19637 / Miyazaki F) (Desulfovibrio vulgaris).